The primary structure comprises 328 residues: Opticin (328 aa).

A signal peptide spans 1–19 (MKFLAFLSLLSLVLQKAET). A glycan (N-linked (GlcNAc...) asparagine) is linked at asparagine 46. Position 69 is a sulfotyrosine (tyrosine 69). N-linked (GlcNAc...) asparagine glycans are attached at residues asparagine 80 and asparagine 101. The 38-residue stretch at 112–149 (LLNSQSSHGLPTCLVCVCLGSSVYCDDADLENIPPLPQ) folds into the LRRNT domain. LRR repeat units lie at residues 150 to 171 (MTTYLYARFNHISHIQAGDFKG), 174 to 195 (KLRRIDLSGNSISSIHNDALRL), 198 to 219 (ALQDLILPENQLAALPVLPSGI), 244 to 265 (KLQFLYLANNMLDSIPGPLPLS), 266 to 286 (LRSLHLQNNMIETMESDTFCD), and 296 to 316 (QLEDIRLDGNPINLSLFPEAY). A disulfide bond links cysteine 285 and cysteine 318. An N-linked (GlcNAc...) asparagine glycan is attached at asparagine 308.

The protein belongs to the small leucine-rich proteoglycan (SLRP) family. SLRP class III subfamily. In terms of assembly, homodimer. O-glycosylated. Post-translationally, sulfated on tyrosine residues. In terms of processing, proteolytically cleaved by MMP1, MMP2, MMP3, MMP7, MMP8, MMP9, ADAMTS4, and ADAMTS5. Proteolytically cleaved by MMP13. Expressed in cartilage (at protein level). Expressed in the vitreous collagen, inner limiting membrane, lens capsule, trabecular meshwork, anterior surface of the iris, the area adjacent to the nonpigmented ciliary epithelium, and weakly expressed in the retina of the eye (at protein level). Expressed in the nonpigmented ciliary epithelium of the eye.

It localises to the secreted. The protein resides in the extracellular space. The protein localises to the extracellular matrix. Its function is as follows. Inhibits angiogenesis in the vitreous humor of the eye, and therefore represses neovascularization. Binds collagen fibrils. May be involved in collagen fiber organization via regulation of other members of the small leucine-rich repeat proteoglycan superfamily. The sequence is that of Opticin (Optc) from Mus musculus (Mouse).